The sequence spans 425 residues: Adenylosuccinate synthetase (425 aa).

GTP contacts are provided by residues 12-18 and 40-42; these read GDEGKGK and GHT. Asp13 acts as the Proton acceptor in catalysis. The Mg(2+) site is built by Asp13 and Gly40. IMP contacts are provided by residues 13-16, 38-41, Thr130, Arg144, Gln224, Thr239, and Arg301; these read DEGK and NAGH. Catalysis depends on His41, which acts as the Proton donor. 297 to 303 is a binding site for substrate; sequence TVSNRRR. Residues Arg303, 329–331, and 411–413 each bind GTP; these read KLD and STS.

Belongs to the adenylosuccinate synthetase family. As to quaternary structure, homodimer. Mg(2+) serves as cofactor.

The protein localises to the cytoplasm. It carries out the reaction IMP + L-aspartate + GTP = N(6)-(1,2-dicarboxyethyl)-AMP + GDP + phosphate + 2 H(+). It functions in the pathway purine metabolism; AMP biosynthesis via de novo pathway; AMP from IMP: step 1/2. Functionally, plays an important role in the de novo pathway of purine nucleotide biosynthesis. Catalyzes the first committed step in the biosynthesis of AMP from IMP. The sequence is that of Adenylosuccinate synthetase from Wolbachia pipientis subsp. Culex pipiens (strain wPip).